Consider the following 533-residue polypeptide: Subtilisin-like protease 1 (533 aa).

Residues 1–19 (MGVFRFISISLAAVSAANA) form the signal peptide. Positions 20 to 116 (AQILSMPHAQ…VEPDTIISVH (97 aa)) are excised as a propeptide. The Inhibitor I9 domain maps to 34–115 (SYIVMMKDDT…FVEPDTIISV (82 aa)). Residues 126–400 (SWGLARISNP…NVLINNGGAK (275 aa)) enclose the Peptidase S8 domain. Catalysis depends on charge relay system residues aspartate 158 and histidine 190. Positions 175–198 (GSNQVNDGDDRDGSGHGTHTSGTM) are disordered. N-linked (GlcNAc...) asparagine glycans are attached at residues asparagine 233 and asparagine 251. The segment covering 282-294 (NDNQDAQSSSPAS) has biased composition (polar residues). The tract at residues 282-312 (NDNQDAQSSSPASEPSVCTVGSSAEDDSRSS) is disordered. Catalysis depends on serine 345, which acts as the Charge relay system. Residues 378-394 (TSSITDAGPGTPTNVLI) show a composition bias toward polar residues. Positions 378-512 (TSSITDAGPG…YPGGDNFDFD (135 aa)) are disordered. The span at 405-470 (NPNPAPSPSP…FPGEPFPGEP (66 aa)) shows a compositional bias: pro residues. Positions 471–487 (FPGESFPGESFPGESAP) are enriched in low complexity. Residues 488–502 (APAPMPPSPQHPHTP) show a composition bias toward pro residues.

It belongs to the peptidase S8 family.

It is found in the secreted. In terms of biological role, secreted subtilisin-like serine protease with keratinolytic activity that contributes to pathogenicity. The polypeptide is Subtilisin-like protease 1 (SUB1) (Arthroderma benhamiae (strain ATCC MYA-4681 / CBS 112371) (Trichophyton mentagrophytes)).